Here is a 516-residue protein sequence, read N- to C-terminus: Serine carboxypeptidase II-3 (516 aa).

A signal peptide spans Met-1–Gly-20. The propeptide occupies Ala-21–Glu-77. 3 disulfides stabilise this stretch: Cys-143/Cys-391, Cys-300/Cys-315, and Cys-339/Cys-359. Residues Asn-194 and Asn-205 are each glycosylated (N-linked (GlcNAc...) asparagine). Residue Ser-236 is part of the active site. The N-linked (GlcNAc...) asparagine glycan is linked to Asn-301. Residues Glu-342 to Ser-352 constitute a propeptide, linker peptide. Asn-380 carries N-linked (GlcNAc...) asparagine glycosylation. Active-site residues include Asp-427 and His-484.

The protein belongs to the peptidase S10 family. In terms of assembly, carboxypeptidase II is a dimer, where each monomer is composed of two chains linked by a disulfide bond. The linker peptide is endoproteolytically excised during enzyme maturation.

It catalyses the reaction Preferential release of a C-terminal arginine or lysine residue.. This Hordeum vulgare (Barley) protein is Serine carboxypeptidase II-3 (CXP;2-3).